The following is a 342-amino-acid chain: S-adenosylmethionine:tRNA ribosyltransferase-isomerase (342 aa).

The protein belongs to the QueA family. In terms of assembly, monomer.

The protein localises to the cytoplasm. The catalysed reaction is 7-aminomethyl-7-carbaguanosine(34) in tRNA + S-adenosyl-L-methionine = epoxyqueuosine(34) in tRNA + adenine + L-methionine + 2 H(+). The protein operates within tRNA modification; tRNA-queuosine biosynthesis. Its function is as follows. Transfers and isomerizes the ribose moiety from AdoMet to the 7-aminomethyl group of 7-deazaguanine (preQ1-tRNA) to give epoxyqueuosine (oQ-tRNA). This Streptococcus mutans serotype c (strain ATCC 700610 / UA159) protein is S-adenosylmethionine:tRNA ribosyltransferase-isomerase.